The sequence spans 172 residues: Myosin regulatory light chain (172 aa).

At Thr17 the chain carries Phosphothreonine. Position 18 is a phosphoserine (Ser18). 3 consecutive EF-hand domains span residues 27–62, 98–133, and 134–168; these read AQIQ…LGKE, DPEE…MGER, and YSEE…GTKD. Ca(2+)-binding residues include Asp40, Asn42, Asp44, and Asp51.

As to quaternary structure, myosin is a hexamer of 2 heavy chains and 4 light chains (two regulatory light chains and two essential light chains). May be phosphorylated by let-502 or/and pak-1 and dephosphorylated by mel-11 to regulate its activation and myosin II-mediated contraction. Expressed in the spermathecal and uterine walls. Weak expression in gonadal sheath and intestinal muscle. Not detected in vulval, pharyngeal or body wall muscles.

It localises to the cytoplasm. The protein resides in the cytoskeleton. In terms of biological role, regulates myosin II activity and organization during embryo elongation. May be involved in the organization of mlc-5 into bundles. Required maternally for cytokinesis during meiosis and mitosis in the early embryo and for the establishment of embryonic anterior-posterior polarity. This Caenorhabditis elegans protein is Myosin regulatory light chain.